A 106-amino-acid polypeptide reads, in one-letter code: L-rhamnose mutarotase (106 aa).

Residue Tyr-20 coordinates substrate. Residue His-24 is the Proton donor of the active site. Substrate is bound by residues Tyr-43 and Trp-78 to Trp-79.

It belongs to the rhamnose mutarotase family. In terms of assembly, homodimer.

It localises to the cytoplasm. The catalysed reaction is alpha-L-rhamnose = beta-L-rhamnose. The protein operates within carbohydrate metabolism; L-rhamnose metabolism. Involved in the anomeric conversion of L-rhamnose. This Verminephrobacter eiseniae (strain EF01-2) protein is L-rhamnose mutarotase.